Reading from the N-terminus, the 1135-residue chain is DNA-directed RNA polymerase I subunit RPA2 (1135 aa).

The disordered stretch occupies residues 1–26 (MDVDGRWRNLPSGPSLKHLTDPSYGI). Arginine 180 contacts RNA. The interval 194-208 (VRPKWKSRGLGYTQF) is loop B. The loop A stretch occupies residues 236-247 (LNFIYRKELFFL). Residue aspartate 367 coordinates RNA. 2 fork loop regions span residues 439-453 (LRSK…DSGL) and 474-489 (RGAA…VRRL). Position 755 (aspartate 755) interacts with Mg(2+). RNA is bound at residue lysine 890. DNA-binding residues include lysine 1020 and arginine 1036. A Phosphoserine modification is found at serine 1051. 4 residues coordinate Zn(2+): cysteine 1070, cysteine 1073, cysteine 1098, and cysteine 1101. The C4-type zinc-finger motif lies at 1070–1101 (CVECGSLLSPLLEKPPPSWSAMRNRKYNCTVC).

This sequence belongs to the RNA polymerase beta chain family. In terms of assembly, component of the RNA polymerase I (Pol I) complex consisting of 13 subunits: a ten-subunit catalytic core composed of POLR1A/RPA1, POLR1B/RPA2, POLR1C/RPAC1, POLR1D/RPAC2, POLR1H/RPA12, POLR2E/RPABC1, POLR2F/RPABC2, POLR2H/RPABC3, POLR2K/RPABC4 and POLR2L/RPABC5; a mobile stalk subunit POLR1F/RPA43 protruding from the core and additional subunits homologous to general transcription factors POLR1E/RPA49 and POLR1G/RPA34. Part of Pol I pre-initiation complex (PIC), in which Pol I core assembles with RRN3 and promoter-bound UTBF and SL1/TIF-IB complex. It depends on Mg(2+) as a cofactor.

The protein localises to the nucleus. It is found in the nucleolus. The protein resides in the chromosome. It catalyses the reaction RNA(n) + a ribonucleoside 5'-triphosphate = RNA(n+1) + diphosphate. Catalytic core component of RNA polymerase I (Pol I), a DNA-dependent RNA polymerase which synthesizes ribosomal RNA precursors using the four ribonucleoside triphosphates as substrates. Transcribes 47S pre-rRNAs from multicopy rRNA gene clusters, giving rise to 5.8S, 18S and 28S ribosomal RNAs. Pol I-mediated transcription cycle proceeds through transcription initiation, transcription elongation and transcription termination stages. During transcription initiation, Pol I pre-initiation complex (PIC) is recruited by the selectivity factor 1 (SL1/TIF-IB) complex bound to the core promoter that precedes an rDNA repeat unit. The PIC assembly bends the promoter favoring the formation of the transcription bubble and promoter escape. Once the polymerase has escaped from the promoter it enters the elongation phase during which RNA is actively polymerized, based on complementarity with the template DNA strand. Highly processive, assembles in structures referred to as 'Miller trees' where many elongating Pol I complexes queue and transcribe the same rDNA coding regions. At terminator sequences downstream of the rDNA gene, PTRF interacts with Pol I and halts Pol I transcription leading to the release of the RNA transcript and polymerase from the DNA. Forms Pol I active center together with the largest subunit POLR1A/RPA1. Appends one nucleotide at a time to the 3' end of the nascent RNA, with POLR1A/RPA1 contributing a Mg(2+)-coordinating DxDGD motif, and POLR1B/RPA2 participating in the coordination of a second Mg(2+) ion and providing lysine residues believed to facilitate Watson-Crick base pairing between the incoming nucleotide and the template base. Typically, Mg(2+) ions direct a 5' nucleoside triphosphate to form a phosphodiester bond with the 3' hydroxyl of the preceding nucleotide of the nascent RNA, with the elimination of pyrophosphate. Has proofreading activity: Pauses and backtracks to allow the cleavage of a missincorporated nucleotide via POLR1H/RPA12. High Pol I processivity is associated with decreased transcription fidelity. The sequence is that of DNA-directed RNA polymerase I subunit RPA2 from Mus musculus (Mouse).